The chain runs to 221 residues: Putative 5'(3')-deoxyribonucleotidase R824 (221 aa).

Residues aspartate 16 and aspartate 18 each contribute to the Mg(2+) site. The active-site Nucleophile is the aspartate 18. Aspartate 18, serine 103, and lysine 138 together coordinate phosphate. Aspartate 149 provides a ligand contact to Mg(2+).

Belongs to the 5'(3')-deoxyribonucleotidase family. Requires Mg(2+) as cofactor.

Its function is as follows. Dephosphorylates the 5' and 2'(3')-phosphates of deoxyribonucleotides. The chain is Putative 5'(3')-deoxyribonucleotidase R824 from Acanthamoeba polyphaga mimivirus (APMV).